A 225-amino-acid polypeptide reads, in one-letter code: 7-cyano-7-deazaguanine synthase (225 aa).

10-20 contacts ATP; it reads LSGGIDSATAA. Cys-191, Cys-199, Cys-202, and Cys-205 together coordinate Zn(2+).

This sequence belongs to the QueC family. It depends on Zn(2+) as a cofactor.

The enzyme catalyses 7-carboxy-7-deazaguanine + NH4(+) + ATP = 7-cyano-7-deazaguanine + ADP + phosphate + H2O + H(+). The protein operates within purine metabolism; 7-cyano-7-deazaguanine biosynthesis. Functionally, catalyzes the ATP-dependent conversion of 7-carboxy-7-deazaguanine (CDG) to 7-cyano-7-deazaguanine (preQ(0)). In Prochlorococcus marinus (strain NATL1A), this protein is 7-cyano-7-deazaguanine synthase.